The primary structure comprises 617 residues: Na(+)/H(+) antiporter NhaA 1 (617 aa).

A na(+)/H(+) antiporter NhaA region spans residues 1–433 (MTVTEQTTAR…GWAIFRITDW (433 aa)). 11 helical membrane-spanning segments follow: residues 33-53 (AAALLLTFTVIAILWANSPWA), 75-95 (MTVKHLVNDALMTFFFFIVGL), 113-133 (AVPVVAAAAGLIVPAIVFLAF), 141-161 (HAWGVVISTDTAFLVGALAII), 171-191 (LFLLTLAVVDDVGALVAIAVF), 194-214 (DAIQVGPLVVAVAVLVALALV), 234-254 (VALYLAGIHPTLAGVAVALLI), 304-324 (VGPAVSFVILPLFALVNAGVL), 340-360 (WGVVAGLVIGKFVGITGATWL), 378-398 (IAGGAALSGIGFTISLFIVDI), and 411-431 (IGVLAASVLAFVFGWAIFRIT). The Thioredoxin domain maps to 434–617 (LSPPEPVGLK…LIRALEAGRR (184 aa)).

In the N-terminal section; belongs to the NhaA Na(+)/H(+) (TC 2.A.33) antiporter family.

It is found in the cell membrane. It carries out the reaction Na(+)(in) + 2 H(+)(out) = Na(+)(out) + 2 H(+)(in). In terms of biological role, na(+)/H(+) antiporter that extrudes sodium in exchange for external protons. In Mycolicibacterium vanbaalenii (strain DSM 7251 / JCM 13017 / BCRC 16820 / KCTC 9966 / NRRL B-24157 / PYR-1) (Mycobacterium vanbaalenii), this protein is Na(+)/H(+) antiporter NhaA 1.